A 171-amino-acid chain; its full sequence is Inosine/xanthosine triphosphatase (171 aa).

A substrate-binding site is contributed by 8 to 13; the sequence is TTNPAK. Glu-38 is a binding site for Mg(2+).

Belongs to the YjjX NTPase family. Homodimer. The cofactor is Mg(2+). Mn(2+) serves as cofactor.

The catalysed reaction is XTP + H2O = XDP + phosphate + H(+). The enzyme catalyses ITP + H2O = IDP + phosphate + H(+). Phosphatase that hydrolyzes non-canonical purine nucleotides such as XTP and ITP to their respective diphosphate derivatives. Probably excludes non-canonical purines from DNA/RNA precursor pool, thus preventing their incorporation into DNA/RNA and avoiding chromosomal lesions. In Klebsiella pneumoniae (strain 342), this protein is Inosine/xanthosine triphosphatase.